The sequence spans 207 residues: MIOREX complex component 11 (207 aa).

The N-terminal 46 residues, 1 to 46, are a transit peptide targeting the mitochondrion; sequence MTVMNLFFRPCQLQMGSGPLELMLKRPTQLTTFMNTRPGGSTQIRF. The Mitochondrial matrix portion of the chain corresponds to 47–98; sequence ISGNLDPVKRREDRLRKIFSKSRLLTRLNKNPKFSHYFDRLSEAGTVPTLTS. A helical transmembrane segment spans residues 99 to 119; sequence FFILHEVTAILPLFLLWWLLY. The Mitochondrial intermembrane segment spans residues 120–177; the sequence is NLDLSDDFKLPNFLNGLMDSCHTAMEKFVGKRYQECLNKNKLILSGTVAYVTVKLLYP. Residues 178–198 traverse the membrane as a helical segment; it reads VRIFISIWGAPYFGKWLLLPF. The Mitochondrial matrix segment spans residues 199 to 207; sequence QKLKHLIKK.

This sequence belongs to the MRX11 family. As to quaternary structure, associates with the mitochondrial ribosome.

It localises to the mitochondrion. The protein localises to the mitochondrion inner membrane. Functionally, component of MIOREX complexes, large expressome-like assemblies of ribosomes with factors involved in all the steps of post-transcriptional gene expression. The polypeptide is MIOREX complex component 11 (Saccharomyces cerevisiae (strain ATCC 204508 / S288c) (Baker's yeast)).